The following is a 254-amino-acid chain: Small ribosomal subunit protein uS2 (254 aa).

This sequence belongs to the universal ribosomal protein uS2 family.

The sequence is that of Small ribosomal subunit protein uS2 from Legionella pneumophila (strain Corby).